The sequence spans 691 residues: Elongation factor G (691 aa).

Residues 6-281 (SRYRNIGIMA…GVVDFLPSPI (276 aa)) enclose the tr-type G domain. Residues 15–22 (AHIDAGKT), 79–83 (DTPGH), and 133–136 (NKMD) each bind GTP.

The protein belongs to the TRAFAC class translation factor GTPase superfamily. Classic translation factor GTPase family. EF-G/EF-2 subfamily.

It localises to the cytoplasm. Its function is as follows. Catalyzes the GTP-dependent ribosomal translocation step during translation elongation. During this step, the ribosome changes from the pre-translocational (PRE) to the post-translocational (POST) state as the newly formed A-site-bound peptidyl-tRNA and P-site-bound deacylated tRNA move to the P and E sites, respectively. Catalyzes the coordinated movement of the two tRNA molecules, the mRNA and conformational changes in the ribosome. This chain is Elongation factor G, found in Wolbachia pipientis subsp. Culex pipiens (strain wPip).